The chain runs to 399 residues: MNDTVREPAGGLGVNHGPALSVVLAGGGTAGHVEPAMAVADALSVLEPNVRITALGTSRGLETRLVPARGYHLELITPVPLPRKPSGDLARLPPRVWRSVRETRAVLDLVDADVVIGFGGYVALPAYLAARGIPGLRRRIPVVIHEANARAGLANRVGLRTADRVLSAVPDSGLRGAEVVGVPVRAAITALDRMALRAEARAHFGFADDARVLLVFGGSQGAVSLNKAVSAAAAELAASGVSVLHAHGPKNVLELLAPRTPDQDDPPYVAVPYLDRMDLAYAAADLVICRSGAMTVAEVSAVGLPAIYVPLPIGNGEQRLNALPVVNAGGGMVVADADLTPALVAREVTGLLTDPPRLAAMTAAAAQVGHRDAAAQVAQAALDIARLAPSRRRAVGGRR.

UDP-N-acetyl-alpha-D-glucosamine contacts are provided by residues 29-31 (TAG), Asn-148, Arg-185, Ser-219, and Gln-318.

It belongs to the glycosyltransferase 28 family. MurG subfamily.

The protein localises to the cell membrane. The enzyme catalyses di-trans,octa-cis-undecaprenyl diphospho-N-acetyl-alpha-D-muramoyl-L-alanyl-D-glutamyl-meso-2,6-diaminopimeloyl-D-alanyl-D-alanine + UDP-N-acetyl-alpha-D-glucosamine = di-trans,octa-cis-undecaprenyl diphospho-[N-acetyl-alpha-D-glucosaminyl-(1-&gt;4)]-N-acetyl-alpha-D-muramoyl-L-alanyl-D-glutamyl-meso-2,6-diaminopimeloyl-D-alanyl-D-alanine + UDP + H(+). It participates in cell wall biogenesis; peptidoglycan biosynthesis. In terms of biological role, cell wall formation. Catalyzes the transfer of a GlcNAc subunit on undecaprenyl-pyrophosphoryl-MurNAc-pentapeptide (lipid intermediate I) to form undecaprenyl-pyrophosphoryl-MurNAc-(pentapeptide)GlcNAc (lipid intermediate II). This is UDP-N-acetylglucosamine--N-acetylmuramyl-(pentapeptide) pyrophosphoryl-undecaprenol N-acetylglucosamine transferase from Mycobacterium ulcerans (strain Agy99).